The primary structure comprises 282 residues: Acyl-CoA-binding domain-containing protein 6 (282 aa).

The interval 1–31 (MASSFLPAGAITGDSGGELSSGDDSGEVEFP) is disordered. Residues 42–127 (LAELFEKAAA…VKKLDPGWNP (86 aa)) form the ACB domain. Residues 69-73 (YARYK) and K95 each bind an acyl-CoA. Phosphoserine is present on S106. Y114 serves as a coordination point for an acyl-CoA. ANK repeat units follow at residues 191–220 (EGRA…DINC) and 224–253 (EGQT…DPTL).

Monomer. As to expression, detected in placenta and spleen (at protein level). Detected in placenta, umbilical cord blood, CD34-positive hematopoietic progenitor cells and bone marrow.

The protein resides in the cytoplasm. It is found in the nucleus. Binds long-chain acyl-coenzyme A molecules with a strong preference for unsaturated C18:1-CoA, lower affinity for unsaturated C20:4-CoA, and very weak affinity for saturated C16:0-CoA. Does not bind fatty acids. Plays a role in protein N-myristoylation. The polypeptide is Acyl-CoA-binding domain-containing protein 6 (ACBD6) (Homo sapiens (Human)).